The following is a 571-amino-acid chain: Protein dead ringer homolog (571 aa).

Disordered regions lie at residues 45–117 (QHQQ…EPDK) and 190–229 (KRMQ…SCNG). The segment covering 49–77 (RMMEQHKNDDVISNDVRCDDFSDGGERQR) has biased composition (basic and acidic residues). Polar residues predominate over residues 195–206 (DHNIQQSTNHIP). The span at 207–224 (TPSSASSHTSSGSVTSQT) shows a compositional bias: low complexity. The ARID domain maps to 249–341 (DIKRKEFLDD…YLYPFECERE (93 aa)). Positions 459-471 (AAHHAAQQAAQHQ) are enriched in low complexity. Positions 459–528 (AAHHAAQQAA…GDRGRHNEMS (70 aa)) are disordered. The REKLES domain occupies 473–558 (SLKKEIDSDY…GVLFAHSPNH (86 aa)). Composition is skewed to basic and acidic residues over residues 487 to 507 (PPEK…DNQR) and 518 to 527 (MGDRGRHNEM).

It is found in the nucleus. Its function is as follows. Transcription factor. In Ciona intestinalis (Transparent sea squirt), this protein is Protein dead ringer homolog (Ci-DRIL1/2).